We begin with the raw amino-acid sequence, 346 residues long: Free fatty acid receptor 3 (346 aa).

At 1–19 (MDTGPDQSYFSGNHWFVFS) the chain is on the extracellular side. Residues 20–40 (VYLLTFLVGLPLNLLALVVFV) form a helical membrane-spanning segment. Residues 41–47 (GKLQRRP) lie on the Cytoplasmic side of the membrane. Residues 48 to 68 (VAVDVLLLNLTASDLLLLLFL) form a helical membrane-spanning segment. Topologically, residues 69-88 (PFRMVEAANGMHWPLPFILC) are extracellular. An intrachain disulfide couples cysteine 88 to cysteine 169. The helical transmembrane segment at 89–111 (PLSGFIFFTTIYLTALFLAAVSI) threads the bilayer. Residues 112-132 (ERFLSVAHPLWYKTRPRLGQA) are Cytoplasmic-facing. Residues 133-153 (GLVSVACWLLASAHCSVVYVI) traverse the membrane as a helical segment. The Extracellular segment spans residues 154 to 178 (EFSGDISHSQGTNGTCYLEFRKDQL). A glycan (N-linked (GlcNAc...) asparagine) is linked at asparagine 166. A helical transmembrane segment spans residues 179–199 (AILLPVRLEMAVVLFVVPLII). At 200–222 (TSYCYSRLVWILGRGGSHRRQRR) the chain is on the cytoplasmic side. A helical membrane pass occupies residues 223-243 (VAGLLAATLLNFLVCFGPYNV). Over 244 to 258 (SHVVGYICGESPAWR) the chain is Extracellular. A helical transmembrane segment spans residues 259 to 279 (IYVTLLSTLNSCVDPFVYYFS). Topologically, residues 280–346 (SSGFQADFHE…TGGQVACAES (67 aa)) are cytoplasmic. Positions 307 to 330 (MELKEQKGGEEQRADRPAERKTSE) are enriched in basic and acidic residues. The interval 307–346 (MELKEQKGGEEQRADRPAERKTSEHSQGCGTGGQVACAES) is disordered.

This sequence belongs to the G-protein coupled receptor 1 family. Highest level in adipose tissue, and lower expression across all tissues tested. Expressed in sympathetic ganglia.

Its subcellular location is the cell membrane. G protein-coupled receptor that is activated by a major product of dietary fiber digestion, the short chain fatty acids (SCFAs), and that plays a role in the regulation of whole-body energy homeostasis and in intestinal immunity. In omnivorous mammals, the short chain fatty acids acetate, propionate and butyrate are produced primarily by the gut microbiome that metabolizes dietary fibers. SCFAs serve as a source of energy but also act as signaling molecules. That G protein-coupled receptor is probably coupled to the pertussis toxin-sensitive, G(i/o)-alpha family of G proteins. Its activation results in the formation of inositol 1,4,5-trisphosphate, the mobilization of intracellular calcium, the phosphorylation of the MAPK3/ERK1 and MAPK1/ERK2 kinases and the inhibition of intracellular cAMP accumulation. Activated by SCFAs and by beta-hydroxybutyrate, a ketone body produced by the liver upon starvation, it inhibits N-type calcium channels and modulates the activity of sympathetic neurons through a signaling cascade involving the beta and gamma subunits of its coupled G protein, phospholipase C and MAP kinases. Thereby, it may regulate energy expenditure through the control of the sympathetic nervous system that controls for instance heart rate. Upon activation by SCFAs accumulating in the intestine, it may also signal to the brain via neural circuits which in turn would regulate intestinal gluconeogenesis. May also control the production of hormones involved in whole-body energy homeostasis. May for instance, regulate blood pressure through renin secretion. May also regulate secretion of the PYY peptide by enteroendocrine cells and control gut motility, intestinal transit rate, and the harvesting of energy from SCFAs produced by gut microbiota. May also indirectly regulate the production of LEP/Leptin, a hormone acting on the CNS to inhibit food intake, in response to the presence of short-chain fatty acids in the intestine. Finally, may also play a role in glucose homeostasis. Besides its role in energy homeostasis, may play a role in intestinal immunity. May mediate the activation of the inflammatory and immune response by SCFAs in the gut, regulating the rapid production of chemokines and cytokines by intestinal epithelial cells. Among SCFAs, the fatty acids containing less than 6 carbons, the most potent activators are probably propionate, butyrate and pentanoate while acetate is a poor activator. The chain is Free fatty acid receptor 3 (FFAR3) from Homo sapiens (Human).